Here is a 194-residue protein sequence, read N- to C-terminus: Fe/S biogenesis protein NfuA (194 aa).

2 residues coordinate [4Fe-4S] cluster: Cys-152 and Cys-155.

This sequence belongs to the NfuA family. In terms of assembly, homodimer. Requires [4Fe-4S] cluster as cofactor.

Functionally, involved in iron-sulfur cluster biogenesis. Binds a 4Fe-4S cluster, can transfer this cluster to apoproteins, and thereby intervenes in the maturation of Fe/S proteins. Could also act as a scaffold/chaperone for damaged Fe/S proteins. The polypeptide is Fe/S biogenesis protein NfuA (Pseudomonas aeruginosa (strain LESB58)).